Consider the following 152-residue polypeptide: UPF0225 protein YchJ (152 aa).

This sequence belongs to the UPF0225 family.

This Escherichia coli O17:K52:H18 (strain UMN026 / ExPEC) protein is UPF0225 protein YchJ.